The primary structure comprises 390 residues: Protein DDI1 homolog (390 aa).

Aspartate 205 is a catalytic residue. The disordered stretch occupies residues 322–344; sequence MHAPRHQDPATTATTASNPAAPV. Residues 330-343 show a composition bias toward low complexity; that stretch reads PATTATTASNPAAP.

This sequence belongs to the DDI1 family.

Its subcellular location is the cytoplasm. Its activity is regulated as follows. Inhibited by pepstatin, diazoacetyl-DL-norleucine methyl ester (DAN) and nelfinavir. Inhibited by the proteinase inhibitors lopinavir and ritonavir. Aspartic protease. The sequence is that of Protein DDI1 homolog from Leishmania major.